The sequence spans 1367 residues: MSELGVAVGQKIELADGSGRTAFVRYVGETAFAPGTWVGIELDEPSGKNDGSVQGERYFNCEMGYGMFVRPTTFNVIAQPPPPPPPSTFRRSVTTRPTSLNASTTRRPAPVDSGLAKRMSLNAPSPSPGPRPSRTSSTSITRSPTRSPTKQLATASSSGNPSRSGTPSTTTKPAGPTTRTRPSLSTSRHSMGPPPTPTTRTTRKPSVSSVGTRPSIGATRPVGGRASMSARSSTNRLSDPRESTGSVSSVGKSGFKRGSASPRSSDEELSASPVPASPVHQKTAALEKLTAPGAGNGGGGASPGATSPNLKATTITPRSSITNTATMNKEIEDLKAKLKVLEKKRMEDREKLNSLEKVKAERDKFERIIQTLQIKYQPQQQEIQDLKRQLKEAENRLYNVEELQAEHDTAMELATLDREMAEETAEVLKVELDALKQKNEELELEVEVLREENSEFTNGMSPEERASTGWLQMERNNERLREALIRLRDITQQQEEELKDQIKSMEEDLREFETIKEQHTTAKEKLAQTEAIVEDLREQLNNALGAEEIIESLTEQTMNQSEEIKELRAVIDDLESLKEINDELEINHVQNEKEMQEEIDLKDSIIAEQFRQANLQRESLEDMEYTLSRFRELVTSLQSDLEDMRASHAVTENESEQLNSRSRAMLDLNMKLQISASKAQVKTIDLELRRMEAQEAEQHLEIVKLFLPDTYQSDRDSVLALLRFKRLAFKANLLNGFIKERVNGQPHPGHEDDIFDGCDAIDKLTWVSAMCDRFVNAISHCSLEQFSRYEGALYELEPVERALNGWIDGLRRDDLKEKQCADELKRTIALMTHLGEVHISNDLESFADDVHMKALLMQSHLESAAISVNSLKAMVQRVIPSSGEDDELAQYFSKRAEAVVSQTRSAKVIAGKTVRALEDLKTRSLSLTPDTLEAFEQSETATRDLANMARQIGLDLHAFLHEEGRTEPYNYMEVQSCIQRSAQASSPTASSPESDLFNTYLSYLRNATSTISDLASLASDLAQTQEFDRTPAPWILRSAELKAAKTVAPDINDELRRLRDDIAEARRSIAVREEMLSTAQVKIETLESRMRDANAKAARIVDLEADLQAAKKEAAQLQEDMEKQDRELKALESDRDKWKKIASESRVVVADGSGVGVDNKASAERAVATAREMDALKKEIEALQAAVRYLREDSRRARLKEQGDYEWLAEPLVKKKPSVQEQRKQLVKKEGKAVLGELVKLVSSAKVFDLGSLPEKAEDRLKWRPAKTTPGWWVAKQMEDWEALKEWEGSVKGRVRELGGVPGSKKAEREEEAKRMVRRTAAAKLQIRLPGMEGKVGHGGGGGSGRRVQIVGSREWESLQGRLAVVV.

A CAP-Gly domain is found at 28 to 70 (GETAFAPGTWVGIELDEPSGKNDGSVQGERYFNCEMGYGMFVR). The tract at residues 76-318 (VIAQPPPPPP…NLKATTITPR (243 aa)) is disordered. Low complexity-rich tracts occupy residues 88–99 (TFRRSVTTRPTS) and 132–149 (PSRT…RSPT). Residues 150 to 163 (KQLATASSSGNPSR) are compositionally biased toward polar residues. Low complexity-rich tracts occupy residues 164–190 (SGTP…SRHS) and 243–259 (STGS…KRGS). Coiled coils occupy residues 321–598 (ITNT…MQEE), 637–698 (LQSD…EAEQ), and 1039–1199 (AELK…RARL).

It belongs to the dynactin 150 kDa subunit family. In terms of assembly, large macromolecular complex of at least 10 components; p150(glued) binds directly to microtubules and to cytoplasmic dynein.

Its subcellular location is the cytoplasm. The protein localises to the cytoskeleton. Functionally, required for the cytoplasmic dynein-driven retrograde movement of vesicles and organelles along microtubules. Dynein-dynactin interaction is a key component of the mechanism of axonal transport of vesicles and organelles. The chain is Dynactin, 150 kDa isoform (ro-3) from Neurospora crassa (strain ATCC 24698 / 74-OR23-1A / CBS 708.71 / DSM 1257 / FGSC 987).